The following is a 370-amino-acid chain: 3-dehydroquinate synthase (370 aa).

Residues 108-112 (GVIGD), 132-133 (TT), Lys-145, and Lys-154 each bind NAD(+). Zn(2+) contacts are provided by Glu-187, His-249, and His-267.

This sequence belongs to the sugar phosphate cyclases superfamily. Dehydroquinate synthase family. Requires Co(2+) as cofactor. It depends on Zn(2+) as a cofactor. NAD(+) serves as cofactor.

It localises to the cytoplasm. The catalysed reaction is 7-phospho-2-dehydro-3-deoxy-D-arabino-heptonate = 3-dehydroquinate + phosphate. It functions in the pathway metabolic intermediate biosynthesis; chorismate biosynthesis; chorismate from D-erythrose 4-phosphate and phosphoenolpyruvate: step 2/7. Catalyzes the conversion of 3-deoxy-D-arabino-heptulosonate 7-phosphate (DAHP) to dehydroquinate (DHQ). This is 3-dehydroquinate synthase from Cereibacter sphaeroides (strain ATCC 17023 / DSM 158 / JCM 6121 / CCUG 31486 / LMG 2827 / NBRC 12203 / NCIMB 8253 / ATH 2.4.1.) (Rhodobacter sphaeroides).